The chain runs to 398 residues: Glycerol-3-phosphate dehydrogenase [NAD(+)] 1 (398 aa).

Residues 50–55 (GSGNWG), Phe-138, Lys-161, and Ala-194 contribute to the NAD(+) site. Lys-161 provides a ligand contact to substrate. Lys-253 serves as the catalytic Proton acceptor. NAD(+) is bound by residues Arg-318 and Gln-350. Position 318–319 (318–319 (RN)) interacts with substrate.

It belongs to the NAD-dependent glycerol-3-phosphate dehydrogenase family.

The protein resides in the cytoplasm. It catalyses the reaction sn-glycerol 3-phosphate + NAD(+) = dihydroxyacetone phosphate + NADH + H(+). The protein is Glycerol-3-phosphate dehydrogenase [NAD(+)] 1 (GPD1) of Yarrowia lipolytica (strain CLIB 122 / E 150) (Yeast).